A 250-amino-acid chain; its full sequence is 5-oxoprolinase subunit A (250 aa).

Belongs to the LamB/PxpA family. Forms a complex composed of PxpA, PxpB and PxpC.

The catalysed reaction is 5-oxo-L-proline + ATP + 2 H2O = L-glutamate + ADP + phosphate + H(+). Catalyzes the cleavage of 5-oxoproline to form L-glutamate coupled to the hydrolysis of ATP to ADP and inorganic phosphate. The polypeptide is 5-oxoprolinase subunit A (Thermus thermophilus (strain ATCC 27634 / DSM 579 / HB8)).